A 440-amino-acid polypeptide reads, in one-letter code: Ribulose bisphosphate carboxylase large chain (440 aa).

Lysine 3 is subject to N6,N6,N6-trimethyllysine. Substrate-binding residues include asparagine 112 and threonine 162. The active-site Proton acceptor is lysine 164. A substrate-binding site is contributed by lysine 166. Mg(2+) contacts are provided by lysine 190, aspartate 192, and glutamate 193. Lysine 190 is modified (N6-carboxylysine). The active-site Proton acceptor is histidine 283. Arginine 284, histidine 316, and serine 368 together coordinate substrate.

The protein belongs to the RuBisCO large chain family. Type I subfamily. In terms of assembly, heterohexadecamer of 8 large chains and 8 small chains; disulfide-linked. The disulfide link is formed within the large subunit homodimers. Requires Mg(2+) as cofactor. The disulfide bond which can form in the large chain dimeric partners within the hexadecamer appears to be associated with oxidative stress and protein turnover.

It localises to the plastid. The protein localises to the chloroplast. The enzyme catalyses 2 (2R)-3-phosphoglycerate + 2 H(+) = D-ribulose 1,5-bisphosphate + CO2 + H2O. The catalysed reaction is D-ribulose 1,5-bisphosphate + O2 = 2-phosphoglycolate + (2R)-3-phosphoglycerate + 2 H(+). In terms of biological role, ruBisCO catalyzes two reactions: the carboxylation of D-ribulose 1,5-bisphosphate, the primary event in carbon dioxide fixation, as well as the oxidative fragmentation of the pentose substrate in the photorespiration process. Both reactions occur simultaneously and in competition at the same active site. In Bambusa multiplex (Hedge bamboo), this protein is Ribulose bisphosphate carboxylase large chain.